The primary structure comprises 418 residues: Gamma-glutamyl phosphate reductase (418 aa).

Belongs to the gamma-glutamyl phosphate reductase family.

It localises to the cytoplasm. It carries out the reaction L-glutamate 5-semialdehyde + phosphate + NADP(+) = L-glutamyl 5-phosphate + NADPH + H(+). It participates in amino-acid biosynthesis; L-proline biosynthesis; L-glutamate 5-semialdehyde from L-glutamate: step 2/2. Functionally, catalyzes the NADPH-dependent reduction of L-glutamate 5-phosphate into L-glutamate 5-semialdehyde and phosphate. The product spontaneously undergoes cyclization to form 1-pyrroline-5-carboxylate. This chain is Gamma-glutamyl phosphate reductase, found in Agathobacter rectalis (strain ATCC 33656 / DSM 3377 / JCM 17463 / KCTC 5835 / VPI 0990) (Eubacterium rectale).